Here is a 209-residue protein sequence, read N- to C-terminus: Ribosomal RNA small subunit methyltransferase G (209 aa).

Residues G75, L80, 126–127 (VE), and R141 each bind S-adenosyl-L-methionine.

Belongs to the methyltransferase superfamily. RNA methyltransferase RsmG family.

The protein resides in the cytoplasm. It catalyses the reaction guanosine(527) in 16S rRNA + S-adenosyl-L-methionine = N(7)-methylguanosine(527) in 16S rRNA + S-adenosyl-L-homocysteine. Functionally, specifically methylates the N7 position of guanine in position 527 of 16S rRNA. This chain is Ribosomal RNA small subunit methyltransferase G, found in Colwellia psychrerythraea (strain 34H / ATCC BAA-681) (Vibrio psychroerythus).